We begin with the raw amino-acid sequence, 545 residues long: CTP synthase (545 aa).

Positions 1-266 (MTHFIFVTGG…DDLICERFGF (266 aa)) are amidoligase domain. Ser13 is a binding site for CTP. Residue Ser13 coordinates UTP. Residues 14 to 19 (SLGKGI) and Asp71 contribute to the ATP site. Residues Asp71 and Glu140 each coordinate Mg(2+). CTP is bound by residues 147 to 149 (DIE), 187 to 192 (KTKPTQ), and Lys223. UTP is bound by residues 187–192 (KTKPTQ) and Lys223. Residue 239–241 (KDA) coordinates ATP. One can recognise a Glutamine amidotransferase type-1 domain in the interval 292–543 (RVAMVGKYVE…IDAAKTQHQK (252 aa)). Residue Gly353 coordinates L-glutamine. The Nucleophile; for glutamine hydrolysis role is filled by Cys380. L-glutamine contacts are provided by residues 381-384 (LGMQ), Glu404, and Arg471. Catalysis depends on residues His516 and Glu518.

Belongs to the CTP synthase family. Homotetramer.

It catalyses the reaction UTP + L-glutamine + ATP + H2O = CTP + L-glutamate + ADP + phosphate + 2 H(+). The enzyme catalyses L-glutamine + H2O = L-glutamate + NH4(+). The catalysed reaction is UTP + NH4(+) + ATP = CTP + ADP + phosphate + 2 H(+). The protein operates within pyrimidine metabolism; CTP biosynthesis via de novo pathway; CTP from UDP: step 2/2. Allosterically activated by GTP, when glutamine is the substrate; GTP has no effect on the reaction when ammonia is the substrate. The allosteric effector GTP functions by stabilizing the protein conformation that binds the tetrahedral intermediate(s) formed during glutamine hydrolysis. Inhibited by the product CTP, via allosteric rather than competitive inhibition. Functionally, catalyzes the ATP-dependent amination of UTP to CTP with either L-glutamine or ammonia as the source of nitrogen. Regulates intracellular CTP levels through interactions with the four ribonucleotide triphosphates. This is CTP synthase from Acinetobacter baumannii (strain ACICU).